Consider the following 699-residue polypeptide: PTS system glucose-specific EIICBA component (699 aa).

Residues 3–424 (KALFGVLQKI…FNLKTPGRED (422 aa)) form the PTS EIIC type-1 domain. A run of 11 helical transmembrane segments spans residues 16–36 (LMLP…GNAM), 66–86 (IVFD…LANG), 89–109 (VAGI…SAVL), 139–159 (IPTL…AALL), 180–200 (FVPI…LVIW), 233–253 (LIPF…FFSY), 283–303 (FMTG…LAIY), 313–333 (LVAG…ITEP), 338–358 (FLFV…LSFM), 365–385 (VKIG…GILP), and 388–408 (TAWW…YFGF). In terms of domain architecture, PTS EIIB type-1 spans 439–520 (GDLPYEILQA…QDIIAGRKPR (82 aa)). The active-site Phosphocysteine intermediate; for EIIB activity is Cys-461. A PTS EIIA type-1 domain is found at 568–672 (DQVFSGKMMG…SLMTPIVFTN (105 aa)). The Tele-phosphohistidine intermediate; for EIIA activity role is filled by His-620.

Its subcellular location is the cell membrane. It catalyses the reaction N(pros)-phospho-L-histidyl-[protein] + D-glucose(out) = D-glucose 6-phosphate(in) + L-histidyl-[protein]. The catalysed reaction is D-glucosamine(out) + N(pros)-phospho-L-histidyl-[protein] = D-glucosamine 6-phosphate(in) + L-histidyl-[protein]. Functionally, the phosphoenolpyruvate-dependent sugar phosphotransferase system (sugar PTS), a major carbohydrate active transport system, catalyzes the phosphorylation of incoming sugar substrates concomitantly with their translocation across the cell membrane. This system is involved in glucose transport. The system can also transport glucosamine. In addition, plays an important role in the phosphorylation of EIIA-deficient PTS transporters. The EIIA domain can transfer a phosphoryl group to EIIA-deficient PTS transporters, enabling growth with maltose, N-acetylglucosamine, sucrose or trehalose as the sole carbon source. This Bacillus subtilis (strain 168) protein is PTS system glucose-specific EIICBA component (ptsG).